A 75-amino-acid polypeptide reads, in one-letter code: U6-lycotoxin-Ls1b (75 aa).

Positions 1 to 21 (MKLLLFTALVLVVISLIEVEA) are cleaved as a signal peptide. Residues 22–25 (ENER) constitute a propeptide that is removed on maturation.

This sequence belongs to the neurotoxin 19 (CSTX) family. 06 (U6-Lctx) subfamily. In terms of processing, contains 4 disulfide bonds. Expressed by the venom gland.

It localises to the secreted. The chain is U6-lycotoxin-Ls1b from Lycosa singoriensis (Wolf spider).